Consider the following 110-residue polypeptide: Cytochrome c6 (110 aa).

A signal peptide spans 1-25 (MKKLVSSVILALILFGFSWVSPAFA). 4 residues coordinate heme c: Cys39, Cys42, His43, and Met83.

Belongs to the cytochrome c family. PetJ subfamily. As to quaternary structure, monomer. Post-translationally, binds 1 heme c group covalently per subunit.

The protein resides in the cellular thylakoid lumen. In terms of biological role, functions as an electron carrier between membrane-bound cytochrome b6-f and photosystem I in oxygenic photosynthesis. This Gloeothece citriformis (strain PCC 7424) (Cyanothece sp. (strain PCC 7424)) protein is Cytochrome c6.